Consider the following 154-residue polypeptide: Large ribosomal subunit protein uL23 (154 aa).

It belongs to the universal ribosomal protein uL23 family.

Functionally, this protein binds to a specific region on the 26S rRNA. The protein is Large ribosomal subunit protein uL23 (RPL23A) of Daucus carota (Wild carrot).